The primary structure comprises 382 residues: Lipid-A-disaccharide synthase (382 aa).

The protein belongs to the LpxB family.

The catalysed reaction is 2-N,3-O-bis[(3R)-3-hydroxytetradecanoyl]-alpha-D-glucosaminyl 1-phosphate + UDP-2-N,3-O-bis[(3R)-3-hydroxytetradecanoyl]-alpha-D-glucosamine = lipid A disaccharide (E. coli) + UDP + H(+). It carries out the reaction a lipid X + a UDP-2-N,3-O-bis[(3R)-3-hydroxyacyl]-alpha-D-glucosamine = a lipid A disaccharide + UDP + H(+). It participates in glycolipid biosynthesis; lipid IV(A) biosynthesis; lipid IV(A) from (3R)-3-hydroxytetradecanoyl-[acyl-carrier-protein] and UDP-N-acetyl-alpha-D-glucosamine: step 5/6. Functionally, condensation of UDP-2,3-diacylglucosamine and 2,3-diacylglucosamine-1-phosphate to form lipid A disaccharide, a precursor of lipid A, a phosphorylated glycolipid that anchors the lipopolysaccharide to the outer membrane of the cell. This Escherichia coli O8 (strain IAI1) protein is Lipid-A-disaccharide synthase.